The sequence spans 358 residues: DnaJ homolog subfamily C member 18 (358 aa).

A J domain is found at 82–146; it reads NYYEILGVSR…DKRLRYDEYG (65 aa). A helical membrane pass occupies residues 228-248; that stretch reads AFIQLLPVLVIVIISVITQLL.

It is found in the endoplasmic reticulum membrane. The protein is DnaJ homolog subfamily C member 18 (DNAJC18) of Macaca fascicularis (Crab-eating macaque).